The following is a 410-amino-acid chain: 23S rRNA (uracil(747)-C(5))-methyltransferase (410 aa).

Residues cysteine 61, cysteine 67, cysteine 70, and cysteine 137 each contribute to the [4Fe-4S] cluster site. S-adenosyl-L-methionine contacts are provided by glutamine 253, tyrosine 279, glutamate 300, and aspartate 341. Cysteine 367 functions as the Nucleophile in the catalytic mechanism.

Belongs to the class I-like SAM-binding methyltransferase superfamily. RNA M5U methyltransferase family.

The catalysed reaction is uridine(747) in 23S rRNA + S-adenosyl-L-methionine = 5-methyluridine(747) in 23S rRNA + S-adenosyl-L-homocysteine + H(+). Its activity is regulated as follows. Activated by magnesium ions. Catalyzes the formation of 5-methyl-uridine at position equivalent to 747 (m5U747) in 23S rRNA (m5U859 in the P.abyssi numbering). The sequence is that of 23S rRNA (uracil(747)-C(5))-methyltransferase from Pyrococcus abyssi (strain GE5 / Orsay).